Consider the following 1415-residue polypeptide: DNA-directed RNA polymerase subunit beta' (1415 aa).

The Zn(2+) site is built by Cys-70, Cys-72, Cys-85, and Cys-88. 3 residues coordinate Mg(2+): Asp-461, Asp-463, and Asp-465. The Zn(2+) site is built by Cys-820, Cys-894, Cys-901, and Cys-904.

The protein belongs to the RNA polymerase beta' chain family. In terms of assembly, the RNAP catalytic core consists of 2 alpha, 1 beta, 1 beta' and 1 omega subunit. When a sigma factor is associated with the core the holoenzyme is formed, which can initiate transcription. Requires Mg(2+) as cofactor. The cofactor is Zn(2+).

It catalyses the reaction RNA(n) + a ribonucleoside 5'-triphosphate = RNA(n+1) + diphosphate. Its function is as follows. DNA-dependent RNA polymerase catalyzes the transcription of DNA into RNA using the four ribonucleoside triphosphates as substrates. This chain is DNA-directed RNA polymerase subunit beta', found in Cupriavidus necator (strain ATCC 17699 / DSM 428 / KCTC 22496 / NCIMB 10442 / H16 / Stanier 337) (Ralstonia eutropha).